The primary structure comprises 99 residues: Indole-3-acetic acid-induced protein ARG2 (99 aa).

The disordered stretch occupies residues 40 to 62; it reads RGGASIGGNMVPKSGEEKVRGGE. A compositionally biased stretch (basic and acidic residues) spans 53-62; sequence SGEEKVRGGE.

This chain is Indole-3-acetic acid-induced protein ARG2 (ARG2), found in Vigna radiata var. radiata (Mung bean).